Here is a 547-residue protein sequence, read N- to C-terminus: RNA N(6)-adenosine-methyltransferase mettl16 (547 aa).

An RNA-binding region spans residues 17 to 20; that stretch reads PPDF. S-adenosyl-L-methionine is bound by residues R82, G110, S114, E133, T164, and N184. The interval 163–167 is K-loop; it reads KTLLM. RNA-binding stretches follow at residues 199 to 211, 250 to 254, and 277 to 283; these read SRNPHRSPPSSVN, GKKCS, and QGRTMRW. Positions 289–398 are VCR 1; that stretch reads FYEEVIIPNP…QLRELPRAPN (110 aa). The interval 383–473 is disordered; that stretch reads KRDRTRQLRE…SKPDEVCNND (91 aa). The span at 431-447 shows a compositional bias: polar residues; the sequence is SVTQSETCVPHTSSTPE. The tract at residues 500–547 is VCR 2; it reads FLFKCVLNVKKENSDVLVEMHCVEGQNRDLMNQLCTYIRNQIYRLATS.

The protein belongs to the methyltransferase superfamily. METTL16/RlmF family.

The protein resides in the nucleus. It localises to the cytoplasm. It catalyses the reaction adenosine in U6 snRNA + S-adenosyl-L-methionine = N(6)-methyladenosine in U6 snRNA + S-adenosyl-L-homocysteine + H(+). It carries out the reaction an adenosine in mRNA + S-adenosyl-L-methionine = an N(6)-methyladenosine in mRNA + S-adenosyl-L-homocysteine + H(+). Methyltransferase activity is autoinhibited by the K-loop region that blocks S-adenosyl-L-methionine-binding. Upon activation, K-loop changes conformation, allowing S-adenosyl-L-methionine-binding and subsequent methyltransferase activity. mRNA N6-adenosine-methyltransferase activity is inhibited by zinc. RNA N6-methyltransferase that methylates adenosine residues at the N(6) position of a subset of RNAs and is involved in S-adenosyl-L-methionine homeostasis by regulating expression of MAT2A transcripts. Able to N6-methylate a subset of mRNAs and U6 small nuclear RNAs (U6 snRNAs). In contrast to the METTL3-METTL14 heterodimer, only able to methylate a limited number of RNAs: requires both a 5'UACAGAGAA-3' nonamer sequence and a specific RNA structure. Plays a key role in S-adenosyl-L-methionine homeostasis by mediating N6-methylation of MAT2A mRNAs, altering splicing of MAT2A transcripts: in presence of S-adenosyl-L-methionine, binds the 3'-UTR region of MAT2A mRNA and specifically N6-methylates the first hairpin of MAT2A mRNA, impairing MAT2A splicing and protein expression. In S-adenosyl-L-methionine-limiting conditions, binds the 3'-UTR region of MAT2A mRNA but stalls due to the lack of a methyl donor, preventing N6-methylation and promoting expression of MAT2A. In addition to mRNAs, also able to mediate N6-methylation of U6 small nuclear RNA (U6 snRNA): specifically N6-methylates adenine in position 43 of U6 snRNAs. This Xenopus laevis (African clawed frog) protein is RNA N(6)-adenosine-methyltransferase mettl16 (mettl16).